We begin with the raw amino-acid sequence, 103 residues long: Protein Rev (103 aa).

Ser-5 is modified (phosphoserine; by host CK2). Positions 18–26 are homomultimerization; it reads VIKILYQSN. The span at 25 to 34 shows a compositional bias: polar residues; it reads SNPYPNDSGT. Disordered regions lie at residues 25 to 48 and 66 to 103; these read SNPY…WRAR and GLQE…TATT. The Nuclear localization signal and RNA-binding (RRE) motif lies at 34–50; the sequence is TRQARKNRRRRWRARQR. Residues 36-48 are compositionally biased toward basic residues; it reads QARKNRRRRWRAR. Positions 73 to 84 match the Nuclear export signal and binding to XPO1 motif; that stretch reads LPLPPLDRLSLN. The residue at position 92 (Ser-92) is a Phosphoserine; by host.

It belongs to the HIV-1 REV protein family. Homomultimer; when bound to the RRE. Multimeric assembly is essential for activity and may involve XPO1. Binds to human KPNB1, XPO1, TNPO1, RANBP5 and IPO7. Interacts with the viral Integrase. Interacts with human KHDRBS1. Interacts with human NAP1; this interaction decreases Rev multimerization and stimulates its activity. Interacts with human DEAD-box helicases DDX3 and DDX24; these interactions may serve for viral RNA export to the cytoplasm and packaging, respectively. Interacts with human PSIP1; this interaction may inhibit HIV-1 DNA integration by promoting dissociation of the Integrase-LEDGF/p75 complex. In terms of processing, asymmetrically arginine dimethylated at one site by host PRMT6. Methylation impairs the RNA-binding activity and export of viral RNA from the nucleus to the cytoplasm. Post-translationally, phosphorylated by protein kinase CK2. Presence of, and maybe binding to the N-terminus of the regulatory beta subunit of CK2 is necessary for CK2-mediated Rev's phosphorylation.

Its subcellular location is the host nucleus. It localises to the host nucleolus. The protein resides in the host cytoplasm. Functionally, escorts unspliced or incompletely spliced viral pre-mRNAs (late transcripts) out of the nucleus of infected cells. These pre-mRNAs carry a recognition sequence called Rev responsive element (RRE) located in the env gene, that is not present in fully spliced viral mRNAs (early transcripts). This function is essential since most viral proteins are translated from unspliced or partially spliced pre-mRNAs which cannot exit the nucleus by the pathway used by fully processed cellular mRNAs. Rev itself is translated from a fully spliced mRNA that readily exits the nucleus. Rev's nuclear localization signal (NLS) binds directly to KPNB1/Importin beta-1 without previous binding to KPNA1/Importin alpha-1. KPNB1 binds to the GDP bound form of RAN (Ran-GDP) and targets Rev to the nucleus. In the nucleus, the conversion from Ran-GDP to Ran-GTP dissociates Rev from KPNB1 and allows Rev's binding to the RRE in viral pre-mRNAs. Rev multimerization on the RRE via cooperative assembly exposes its nuclear export signal (NES) to the surface. Rev can then form a complex with XPO1/CRM1 and Ran-GTP, leading to nuclear export of the complex. Conversion from Ran-GTP to Ran-GDP mediates dissociation of the Rev/RRE/XPO1/RAN complex, so that Rev can return to the nucleus for a subsequent round of export. Beside KPNB1, also seems to interact with TNPO1/Transportin-1, RANBP5/IPO5 and IPO7/RANBP7 for nuclear import. The nucleoporin-like HRB/RIP is an essential cofactor that probably indirectly interacts with Rev to release HIV RNAs from the perinuclear region to the cytoplasm. The sequence is that of Protein Rev from Pan troglodytes (Chimpanzee).